The following is a 116-amino-acid chain: Hydrogenase maturation factor HypA (116 aa).

His-2 is a binding site for Ni(2+). 4 residues coordinate Zn(2+): Cys-73, Cys-76, Cys-90, and Cys-93.

The protein belongs to the HypA/HybF family.

Involved in the maturation of [NiFe] hydrogenases. Required for nickel insertion into the metal center of the hydrogenase. This is Hydrogenase maturation factor HypA from Escherichia coli O157:H7.